The following is a 195-amino-acid chain: Pyridoxal 5'-phosphate synthase subunit PdxT (195 aa).

46–48 (GES) is an L-glutamine binding site. Cys-78 serves as the catalytic Nucleophile. L-glutamine contacts are provided by residues Arg-105 and 133–134 (IR). Residues His-169 and Glu-171 each act as charge relay system in the active site.

The protein belongs to the glutaminase PdxT/SNO family. In terms of assembly, in the presence of PdxS, forms a dodecamer of heterodimers. Only shows activity in the heterodimer.

The catalysed reaction is aldehydo-D-ribose 5-phosphate + D-glyceraldehyde 3-phosphate + L-glutamine = pyridoxal 5'-phosphate + L-glutamate + phosphate + 3 H2O + H(+). The enzyme catalyses L-glutamine + H2O = L-glutamate + NH4(+). The protein operates within cofactor biosynthesis; pyridoxal 5'-phosphate biosynthesis. Functionally, catalyzes the hydrolysis of glutamine to glutamate and ammonia as part of the biosynthesis of pyridoxal 5'-phosphate. The resulting ammonia molecule is channeled to the active site of PdxS. The polypeptide is Pyridoxal 5'-phosphate synthase subunit PdxT (Geobacillus thermodenitrificans (strain NG80-2)).